Consider the following 1681-residue polypeptide: MGLWGLLCLLIFLDKTWGQEQTYVISAPKIFRVGSSENVVIQAHGYTEAFDATISLKSYPDKKVTYSSGYVNLSPENKFQNSALLTLPPKQFPRDENPVSHVYLEVVSMHFSKSKKIPITYDNGFLFIHTDKPVYTPDQSVKIRVYSLSDDLKPAKRETVLTFVDPEGTEVDIVEENDYTGIISFPDFKIPSNPKYGVWTIKAKYKKDFTTTGTAYFEVKEYVLPRFSVSIEPESNFIGYKNFKNFEITVKARYFYNKMVPDAEVYIFFGLREDIKEDEKQMMHKAMQAATLMDGAAQTCWLAETEVREINYNMFEDRNNNYSYIACTVTESSGGFSEEAEIPGIKYVLSPYTLNLVATPLFLKPGIPFSIKVQVKDSLEQLVGGVPVTLMAQTVNVNQETSDLEPKRSITHSADGVASFVVNLPSEVTSLKFEVKTDAPELPEENQASKEYEAVTYSSLSQSYIYIGWTENYKPMLVGEYLNIIVTPKSPYIDKITHYNYLILSKGKIVQYGTKEKLLYSSYQNINIPVTQDMVPSARLLVYYIVTGEQTAELVADAVWINIEEKCGNQLQVHLSPDKDVYSPGQTVSLDMVTEADSWVALSAVDSAVYGVRGKAKRAMQRVFQAFDDKSDLGCGAGGGRDNVDVFHLAGLTFLTNANADDSQYHDDSCKEILRPKRDLQLLHQKVEEQAAKYKHRVPKKCCYDGARENKYETCEQRVARVTIGPHCIRAFNECCTIADKIRKESHHKGMLLGRIQIKALLPVMKAEIRSYFPESWLWEVHRVPKRNQLQVALPDSLTTWEIQGIGISDNGICVADTLKAKVFKDVFLEMNIPYSVVRGEQIQLKGTVYNYRTSGTMFCVKMSAVEGICTPGSSAASPQTSRSSRCVRQRIEGSSSHLVTFSLLPLEIGLHSINFSLETSFGKEILVKTLRVVPEGIKRESYAGVTLDPRGVYGIVNRRKEFPYRIPLDLVPKTNVKRILSVKGLLIGEFLSTVLSKEGIDILTHLPKGSAEAELMSIVPVFYVFHYLEAGNHWNIFHPDTLARKQSLQKKIKEGLVSVMSYRNADYSYSMWKGASSSAWLTAFALRVLGQVNKYVKQDQYSICNSLLWLIEKCQLENGSFKENSQYLPIKLQGTLPAEAQENTLYLTAFSVIGIRKAIGICPTEKIYTALAKADSFLLERTLPSKSTFTLAIVAYALSLGDRTHPKFRSIVSALKREALVKGDPPIYRFWRDTLQRPDSSAPNSGTAGMVETTAYALLTSLNLKETSYVNPIIKWLSEEQRYGGGFYSTQDTINAIEGLTEYSLLVKQLHLDMDINVSYKHKGDFYQYKVTEKNFLGRPVEVPLNDDLIVTTGYSSGLATVYVKTVVHKTSVAEEFCSFYLKIDTQEVEASSYLSYSDSGHKRIIACASYKPSKEESASGSSHAVMDILLPTGIGANQEDLRALVEGVDQLLTDYQIKDSHVILQLNSIPSRDFLCVRFRIFELFQVGFLNPATFTVYEYHRPDKQCTMIYSTSDTNLQRVCEGAACKCVEADCGQLQAELDLAISADTRKETACKPEIAYAYKVRITSATEENIFVKYTATLLDIYKTGEAAAEKDSEITFIKKISCTNANLVKGKQYLIMGKEALQIKHNFSFKYIYPLDSSTWIEYWPTDTTCPSCQAFVANLDEFAEDIFLNGCE.

The first 18 residues, 1–18 (MGLWGLLCLLIFLDKTWG), serve as a signal peptide directing secretion. N-linked (GlcNAc...) asparagine glycosylation is found at asparagine 72 and asparagine 321. Intrachain disulfides connect cysteine 567-cysteine 814, cysteine 635-cysteine 670, cysteine 702-cysteine 728, cysteine 703-cysteine 735, cysteine 715-cysteine 736, cysteine 860-cysteine 887, cysteine 870-cysteine 1531, cysteine 1105-cysteine 1163, cysteine 1379-cysteine 1509, cysteine 1409-cysteine 1478, cysteine 1524-cysteine 1529, cysteine 1536-cysteine 1610, cysteine 1557-cysteine 1680, and cysteine 1658-cysteine 1661. Residues 675–678 (RPKR) constitute a propeptide that is removed on maturation. The involved in C5AR1 binding stretch occupies residues 696-725 (HRVPKKCCYDGARENKYETCEQRVARVTIG). An Anaphylatoxin-like domain is found at 702–736 (CCYDGARENKYETCEQRVARVTIGPHCIRAFNECC). N-linked (GlcNAc...) asparagine glycosylation is found at asparagine 915, asparagine 1119, and asparagine 1318. The 145-residue stretch at 1536–1680 (CGQLQAELDL…FAEDIFLNGC (145 aa)) folds into the NTR domain. The N-linked (GlcNAc...) asparagine glycan is linked to asparagine 1634.

In terms of assembly, in absence of complement activation, the C5 precursor is first processed by the removal of 4 basic residues, forming two chains, beta and alpha, linked by a disulfide bond. Complement C5b is composed of complement C5b and complement C5 beta chains that are associated via disulfide bonds. Component of the membrane attack complex (MAC), composed of complement C5b, C6, C7, C8A, C8B, C8G and multiple copies of the pore-forming subunit C9. Interacts with the tick complement inhibitors OmCI, RaCI1 and CirpT1. Interacts with cobra venom factor (CVF). In terms of processing, C5 precursor is first processed by the removal of 4 basic residues, forming two chains, beta and alpha, linked by a disulfide bond. During activation of the complement systems, the alpha chain is cleaved into C5a and C5b by the C5 convertase: C5b stays linked to the beta chain, while C5a is released in the plasma. The alpha chain is cleaved by the serine protease complement C2b component of the C5 convertase to generate C5a and C5b following activation by the classical, lectin and GZMK complement systems. The alpha chain is cleaved by CFB component of the C5 convertase to generate C5a and C5b following activation by the alternative complement system.

The protein resides in the secreted. It is found in the target cell membrane. With respect to regulation, membrane attack complex (MAC) assembly is inhibited by CD59, thereby protecting self-cells from damage during complement activation. MAC assembly is also inhibited by clusterin (CLU) chaperones that inhibit polymerization of C9. Precursor of the C5a anaphylatoxin and complement C5b components of the complement pathways, which consist in a cascade of proteins that leads to phagocytosis and breakdown of pathogens and signaling that strengthens the adaptive immune system. Activated downstream of classical, alternative, lectin and GZMK complement pathways. Functionally, component of the membrane attack complex (MAC), a multiprotein complex activated by the complement cascade, which inserts into a target cell membrane and forms a pore, leading to target cell membrane rupture and cell lysis. Complement C5b is generated following cleavage by C5 convertase and initiates formation of the MAC complex: C5b binds sequentially C6, C7, C8 and multiple copies of the pore-forming subunit C9. During MAC complex assembly, the C5b6 subcomplex, composed of complement C5b and C6, associates with the outer leaflet of target cell membrane, reducing the energy for membrane bending. In terms of biological role, mediator of local inflammatory process released following cleavage by C5 convertase. Acts by binding to its receptor (C5AR1 or C5AR2), activating G protein-coupled receptor signaling and inducing a variety of responses including intracellular calcium release, contraction of smooth muscle, increased vascular permeability, and histamine release from mast cells and basophilic leukocytes. C5a is also a potent chemokine which stimulates the locomotion of polymorphonuclear leukocytes and directs their migration toward sites of inflammation. This chain is Complement C5 (C5), found in Rattus norvegicus (Rat).